A 430-amino-acid chain; its full sequence is tRNA(Ile)-lysidine synthase (430 aa).

Position 24 to 29 (24 to 29) interacts with ATP; sequence SGGLDS.

It belongs to the tRNA(Ile)-lysidine synthase family.

The protein resides in the cytoplasm. The catalysed reaction is cytidine(34) in tRNA(Ile2) + L-lysine + ATP = lysidine(34) in tRNA(Ile2) + AMP + diphosphate + H(+). Its function is as follows. Ligates lysine onto the cytidine present at position 34 of the AUA codon-specific tRNA(Ile) that contains the anticodon CAU, in an ATP-dependent manner. Cytidine is converted to lysidine, thus changing the amino acid specificity of the tRNA from methionine to isoleucine. This chain is tRNA(Ile)-lysidine synthase, found in Haemophilus influenzae (strain 86-028NP).